A 238-amino-acid chain; its full sequence is IkB-like protein (238 aa).

4 ANK repeats span residues 48–80 (GSSVFMWICIYGRIDFLKFLFKQESYPGEIINH), 87–118 (GNSALHYLAEKKNHLILEEVLGYFGKNGTRIC), 124–153 (GMTPVMKAAMRGRTLNMLSLIKFGADPTQK), and 158–187 (GFTAWDWAVFTGNMELVKSLNHDYQKPLYM). Residues 80–86 (HHRRDND) carry the Nuclear localization signal motif. Residues 202-213 (KKKPKIIITGCK) carry the Nuclear localization signal motif. The short motif at 205–212 (PKIIITGC) is the PxIxITxC motif; Interaction with host PPP3CA element. Residues 227 to 230 (FLCV) carry the FLCV motif motif.

This sequence belongs to the asfivirus A238L family. As to quaternary structure, interacts with host PPIA. Interacts with host PPP3CA/Calcineurin. Interacts with host RELA/p65; interaction of the 32 kDa form with host RELA results in the formation of a stable complex with NF-kappa-B. Interacts with host PPP3R1. Interacts with host EP300; this interaction inhibits the association of host EP300 with host RELA, JUN and NFATC2. Post-translationally, the protein exists in a 28 kDa and a 32 kDa form, probably due to post-translational modifications which are neither phosphorylation, nor sumoylation.

Its subcellular location is the host nucleus. It localises to the host cytoplasm. Its function is as follows. IkB-like protein that inhibits the binding of NF-kappa-B to DNA, thereby downregulating pro-inflammatory cytokine production. Forms a heterodimer with the NF-kappa-B subunit RELA/p65 and prevents the activation of the NF-kappa-B transcription factor. Inhibits calcineurin function, which is required for the induction of nuclear factor of activated T cells (NFAT)-dependent immune response genes. Prevents the binding of substrates to calcineurin without affecting the phosphatase activity. Does not contain the serine residues that are phosphorylated by host IkB kinase and thus is not degraded following stimulation of the NFkB pathway. The polypeptide is IkB-like protein (A238L) (Ornithodoros (relapsing fever ticks)).